We begin with the raw amino-acid sequence, 450 residues long: Phosphoglucosamine mutase (450 aa).

Residue Ser-101 is the Phosphoserine intermediate of the active site. Ser-101, Asp-240, Asp-242, and Asp-244 together coordinate Mg(2+). Ser-101 carries the post-translational modification Phosphoserine.

It belongs to the phosphohexose mutase family. Requires Mg(2+) as cofactor. In terms of processing, activated by phosphorylation.

The enzyme catalyses alpha-D-glucosamine 1-phosphate = D-glucosamine 6-phosphate. Its function is as follows. Catalyzes the conversion of glucosamine-6-phosphate to glucosamine-1-phosphate. This chain is Phosphoglucosamine mutase, found in Streptococcus thermophilus (strain ATCC BAA-250 / LMG 18311).